A 389-amino-acid chain; its full sequence is Tubby-like F-box protein 11 (389 aa).

The region spanning 36-82 (DYRWSEIPEELLREILIRVEAADGGGWPSRRSVVACAGVCRGWRLLM) is the F-box domain. Positions 250–289 (STMEPQGVASEPSEFPLLGTRSTLSRSQSKPLRSSSSHLK) are disordered. Residues 273-286 (LSRSQSKPLRSSSS) show a composition bias toward low complexity.

It belongs to the TUB family. As to expression, ubiquitous.

This is Tubby-like F-box protein 11 from Arabidopsis thaliana (Mouse-ear cress).